Consider the following 183-residue polypeptide: uncharacterized protein (183 aa).

The segment at 1–36 (MAKRGNKKKQEAPLSLGKHTVGGRVGKPTNAKTGSA) is disordered. Residues 100 to 174 (TNVVIENLAP…FKLSCYIKKN (75 aa)) enclose the RRM domain.

The protein resides in the nucleus. The protein localises to the nucleolus. This is an uncharacterized protein from Schizosaccharomyces pombe (strain 972 / ATCC 24843) (Fission yeast).